Here is a 113-residue protein sequence, read N- to C-terminus: UPF0482 protein YnfB (113 aa).

The N-terminal stretch at 1–28 (MKITLSKRIGLLAFLLPCALALSTTVHA) is a signal peptide.

This sequence belongs to the UPF0482 family.

The sequence is that of UPF0482 protein YnfB from Escherichia coli O127:H6 (strain E2348/69 / EPEC).